A 958-amino-acid polypeptide reads, in one-letter code: Unconventional myosin-Ih (958 aa).

Residues 12 to 691 (GVQDFVLLDA…TLFATEDAFE (680 aa)) enclose the Myosin motor domain. Residue 105–112 (GESGAGKT) participates in ATP binding. A Phosphoserine modification is found at Ser-365. Residues 568-590 (LSSLLEILISKEPSYIRCIKPNE) form an actin-binding region. IQ domains are found at residues 694–716 (KHQL…EYMK) and 717–746 (KRQA…AVQI). In terms of domain architecture, TH1 spans 773–955 (RKNYILNLRY…NGQLRVVSAG (183 aa)).

It belongs to the TRAFAC class myosin-kinesin ATPase superfamily. Myosin family. In terms of tissue distribution, highly expressed in the central nervous system, including the forebrain, midbrain and lower medulla. In the lower medulla, it is broadly expressed throughout the reticular formation. It is expressed in the retrotrapezoid nucleus and the nucleus of the solitary tract, as well as motor neurons of the facial, vagal and ambiguus nuclei. Expressed in neonatal inner-ear organs.

Its function is as follows. Myosins are actin-based motor molecules with ATPase activity. Unconventional myosins serve in intracellular movements. Their highly divergent tails are presumed to bind to membranous compartments, which would be moved relative to actin filaments. This Mus musculus (Mouse) protein is Unconventional myosin-Ih (Myo1h).